Here is a 1646-residue protein sequence, read N- to C-terminus: Monensin-resistant homolog 2 (1646 aa).

It belongs to the MON2 family.

The protein resides in the golgi apparatus. May be required for traffic between late Golgi and early endosomes. This chain is Monensin-resistant homolog 2 (mon-2), found in Caenorhabditis elegans.